Consider the following 278-residue polypeptide: Indole-3-glycerol phosphate synthase (278 aa).

This sequence belongs to the TrpC family.

It carries out the reaction 1-(2-carboxyphenylamino)-1-deoxy-D-ribulose 5-phosphate + H(+) = (1S,2R)-1-C-(indol-3-yl)glycerol 3-phosphate + CO2 + H2O. It participates in amino-acid biosynthesis; L-tryptophan biosynthesis; L-tryptophan from chorismate: step 4/5. The polypeptide is Indole-3-glycerol phosphate synthase (Stutzerimonas stutzeri (strain A1501) (Pseudomonas stutzeri)).